Here is a 347-residue protein sequence, read N- to C-terminus: Ketol-acid reductoisomerase (NADP(+)) (347 aa).

Positions 1–185 (MKIYYDEDAN…GGTRAGVLET (185 aa)) constitute a KARI N-terminal Rossmann domain. NADP(+) is bound by residues 24-27 (YGSQ), arginine 47, serine 50, serine 52, and 82-85 (DEFQ). Residue histidine 107 is part of the active site. Residue glycine 133 coordinates NADP(+). Positions 186-336 (SFKEETETDL…AELRSKMKFL (151 aa)) constitute a KARI C-terminal knotted domain. Mg(2+)-binding residues include aspartate 194, glutamate 198, glutamate 230, and glutamate 234. Residue serine 255 coordinates substrate.

This sequence belongs to the ketol-acid reductoisomerase family. The cofactor is Mg(2+).

It carries out the reaction (2R)-2,3-dihydroxy-3-methylbutanoate + NADP(+) = (2S)-2-acetolactate + NADPH + H(+). It catalyses the reaction (2R,3R)-2,3-dihydroxy-3-methylpentanoate + NADP(+) = (S)-2-ethyl-2-hydroxy-3-oxobutanoate + NADPH + H(+). It functions in the pathway amino-acid biosynthesis; L-isoleucine biosynthesis; L-isoleucine from 2-oxobutanoate: step 2/4. Its pathway is amino-acid biosynthesis; L-valine biosynthesis; L-valine from pyruvate: step 2/4. In terms of biological role, involved in the biosynthesis of branched-chain amino acids (BCAA). Catalyzes an alkyl-migration followed by a ketol-acid reduction of (S)-2-acetolactate (S2AL) to yield (R)-2,3-dihydroxy-isovalerate. In the isomerase reaction, S2AL is rearranged via a Mg-dependent methyl migration to produce 3-hydroxy-3-methyl-2-ketobutyrate (HMKB). In the reductase reaction, this 2-ketoacid undergoes a metal-dependent reduction by NADPH to yield (R)-2,3-dihydroxy-isovalerate. The sequence is that of Ketol-acid reductoisomerase (NADP(+)) from Gamma-proteobacterium EBAC31A08.